The chain runs to 88 residues: uncharacterized protein (88 aa).

The N-terminal stretch at 1–23 (MAVSGLRLTIVWGLLVLILTCQA) is a signal peptide. Residues 25–40 (DKPEGKPDEQPHDSGK) show a composition bias toward basic and acidic residues. A disordered region spans residues 25–45 (DKPEGKPDEQPHDSGKNSEPA).

Its subcellular location is the secreted. This is an uncharacterized protein from Bos taurus (Bovine).